Consider the following 95-residue polypeptide: Putative regulatory protein Pmob_0099 (95 aa).

Belongs to the RemA family.

This is Putative regulatory protein Pmob_0099 from Petrotoga mobilis (strain DSM 10674 / SJ95).